The chain runs to 107 residues: IQ domain-containing protein F6 (107 aa).

Residues 42–71 (QEWAVVKVQAQVRMWQARRRFLQARQAACI) form the IQ domain.

The chain is IQ domain-containing protein F6 (IQCF6) from Homo sapiens (Human).